The sequence spans 117 residues: Large ribosomal subunit protein bL20 (117 aa).

Belongs to the bacterial ribosomal protein bL20 family.

Its function is as follows. Binds directly to 23S ribosomal RNA and is necessary for the in vitro assembly process of the 50S ribosomal subunit. It is not involved in the protein synthesizing functions of that subunit. The chain is Large ribosomal subunit protein bL20 from Ruminiclostridium cellulolyticum (strain ATCC 35319 / DSM 5812 / JCM 6584 / H10) (Clostridium cellulolyticum).